Here is a 169-residue protein sequence, read N- to C-terminus: Chorismate pyruvate-lyase (169 aa).

Residues M35, R77, L115, and E156 each contribute to the substrate site.

The protein belongs to the UbiC family. As to quaternary structure, monomer.

It is found in the cytoplasm. The enzyme catalyses chorismate = 4-hydroxybenzoate + pyruvate. Its pathway is cofactor biosynthesis; ubiquinone biosynthesis. Functionally, removes the pyruvyl group from chorismate, with concomitant aromatization of the ring, to provide 4-hydroxybenzoate (4HB) for the ubiquinone pathway. This Cronobacter sakazakii (strain ATCC BAA-894) (Enterobacter sakazakii) protein is Chorismate pyruvate-lyase.